We begin with the raw amino-acid sequence, 314 residues long: GDP-L-fucose synthase (314 aa).

NADP(+) is bound by residues 15–21 (GHKGMVG) and 109–112 (LGSS). Tyrosine 140 acts as the Proton donor/acceptor in catalysis. NADP(+) contacts are provided by residues lysine 144, 167 to 170 (PTNL), and histidine 183. 4 residues coordinate substrate: lysine 191, tryptophan 206, arginine 213, and aspartate 273.

It belongs to the NAD(P)-dependent epimerase/dehydratase family. Fucose synthase subfamily.

The catalysed reaction is GDP-beta-L-fucose + NADP(+) = GDP-4-dehydro-alpha-D-rhamnose + NADPH + H(+). It functions in the pathway nucleotide-sugar biosynthesis; GDP-L-fucose biosynthesis via de novo pathway; GDP-L-fucose from GDP-alpha-D-mannose: step 2/2. Catalyzes the two-step NADP-dependent conversion of GDP-4-dehydro-6-deoxy-D-mannose to GDP-fucose, involving an epimerase and a reductase reaction. In Sinorhizobium fredii (strain NBRC 101917 / NGR234), this protein is GDP-L-fucose synthase.